The sequence spans 260 residues: Putative ABC transporter ATP-binding protein PF0068 (260 aa).

One can recognise an ABC transporter domain in the interval 2–234; sequence IEVKGVWFWY…DLKRYKLEEP (233 aa). An ATP-binding site is contributed by 34–41; that stretch reads GPNGSGKT.

The protein belongs to the ABC transporter superfamily.

It is found in the cell membrane. Probably part of an ABC transporter complex. Responsible for energy coupling to the transport system. The polypeptide is Putative ABC transporter ATP-binding protein PF0068 (Pyrococcus furiosus (strain ATCC 43587 / DSM 3638 / JCM 8422 / Vc1)).